Reading from the N-terminus, the 101-residue chain is MAMTLRDMDAVRPVNREAVDRHKARMRDEVRAFRLRELRAAQSLTQVQVAALAHIRQSRVSSIENGDIGSAQVNTLRKYVSALGGELDITVRLGDETFTLA.

The 56-residue stretch at Leu35–Thr90 folds into the HTH cro/C1-type domain. A DNA-binding region (H-T-H motif) is located at residues Gln46–Asn65.

Its function is as follows. Putative antitoxin component of a type II toxin-antitoxin (TA) system. Its cognate toxin would be HigB2. This is Putative antitoxin HigA2 from Mycobacterium tuberculosis (strain ATCC 25618 / H37Rv).